A 949-amino-acid chain; its full sequence is Valine--tRNA ligase (949 aa).

Residues 45–55 (PNVTGVLHMGH) carry the 'HIGH' region motif. A 'KMSKS' region motif is present at residues 561–565 (KMSKS). ATP is bound at residue lysine 564. Residues 882 to 949 (EELLKQEKTR…EIKEKLMTLP (68 aa)) are a coiled coil.

The protein belongs to the class-I aminoacyl-tRNA synthetase family. ValS type 1 subfamily. Monomer.

The protein resides in the cytoplasm. The catalysed reaction is tRNA(Val) + L-valine + ATP = L-valyl-tRNA(Val) + AMP + diphosphate. Functionally, catalyzes the attachment of valine to tRNA(Val). As ValRS can inadvertently accommodate and process structurally similar amino acids such as threonine, to avoid such errors, it has a 'posttransfer' editing activity that hydrolyzes mischarged Thr-tRNA(Val) in a tRNA-dependent manner. The protein is Valine--tRNA ligase of Protochlamydia amoebophila (strain UWE25).